Here is a 126-residue protein sequence, read N- to C-terminus: Large ribosomal subunit protein bL19 (126 aa).

Belongs to the bacterial ribosomal protein bL19 family.

Its function is as follows. This protein is located at the 30S-50S ribosomal subunit interface and may play a role in the structure and function of the aminoacyl-tRNA binding site. The polypeptide is Large ribosomal subunit protein bL19 (Prochlorococcus marinus (strain MIT 9312)).